Here is a 700-residue protein sequence, read N- to C-terminus: Polyribonucleotide nucleotidyltransferase (700 aa).

Mg(2+) is bound by residues Asp484 and Asp490. The KH domain maps to Pro551 to Ile610. In terms of domain architecture, S1 motif spans Gly620–Lys688.

This sequence belongs to the polyribonucleotide nucleotidyltransferase family. The cofactor is Mg(2+).

It localises to the cytoplasm. It carries out the reaction RNA(n+1) + phosphate = RNA(n) + a ribonucleoside 5'-diphosphate. Its function is as follows. Involved in mRNA degradation. Catalyzes the phosphorolysis of single-stranded polyribonucleotides processively in the 3'- to 5'-direction. The protein is Polyribonucleotide nucleotidyltransferase of Thermoanaerobacter sp. (strain X514).